The primary structure comprises 2052 residues: Unconventional myosin-X (2052 aa).

Residue Met-1 is modified to N-acetylmethionine. A Myosin motor domain is found at 63–739 (EGVDDMATLT…LEQKLEKRQE (677 aa)). ATP-binding positions include Asn-104, Tyr-113, 160–165 (GAGKTE), and Asn-215. The interval 619–641 (LHSLMATLSASNPFFVRCIKPNM) is actin-binding. IQ domains lie at 742–763 (VTRA…KQYK), 764–787 (KVLD…RFLH), and 788–817 (LKKA…EKRA). The segment at 814 to 884 (EKRAEEEKRK…LSRELEKQKE (71 aa)) is SAH. The tract at residues 819–843 (EEKRKREEEEKRKREEEERERERER) is disordered. Positions 885-935 (NKQVEEILRLEKEIEDLQRMKERQELSLTEASLQKLQQLRDEELRRLEDEA) form a coiled coil. 2 positions are modified to phosphoserine: Ser-963 and Ser-966. Residues 964 to 1093 (VGSGCTGEQG…DYDQDDYEDG (130 aa)) form a disordered region. Acidic residues predominate over residues 988-1003 (PEEEEVDEGFEADDDA). The segment covering 1040–1049 (VVPTSPSADS) has biased composition (polar residues). The span at 1081–1092 (GDYDYDQDDYED) shows a compositional bias: acidic residues. Thr-1152 is modified (phosphothreonine). 2 consecutive PH domains span residues 1206–1304 (EALK…QVHA) and 1386–1491 (EFIV…NVTD). A MyTH4 domain is found at 1541–1689 (LPYGDINLNL…PSRDEIEALI (149 aa)). The region spanning 1694-2038 (MTSTVHCHGG…AYISMIVKKR (345 aa)) is the FERM domain.

It belongs to the TRAFAC class myosin-kinesin ATPase superfamily. Myosin family. Monomer, when in an inactive conformation in the cytosol. Homodimer in its active, membrane-bound conformation; antiparallel coiled coil-mediated dimer formation. Interacts with ECPAS. Interacts with NEO 1. Interacts with VASP. Interacts with DCC and ITGB5; the presence of DCC inhibits ITGB5 binding. Interacts with tubulin; ITGB5 or DCC binding inhibits tubulin binding. Interacts strongly with CALM3 and weakly with CALM, the CALM3 interaction is essential for function in filopodial extension and motility. Interacts with ITGB1, ITGB3 and ITGB5. As to expression, detected in kidney, testis, liver, kidney, cerebellum and brain cortex (at protein level).

It localises to the cytoplasm. The protein localises to the cytosol. Its subcellular location is the cell projection. The protein resides in the lamellipodium. It is found in the ruffle. It localises to the cytoskeleton. The protein localises to the filopodium tip. Its subcellular location is the cell cortex. The protein resides in the filopodium membrane. In terms of biological role, myosins are actin-based motor molecules with ATPase activity. Unconventional myosins serve in intracellular movements. MYO10 binds to actin filaments and actin bundles and functions as a plus end-directed motor. Moves with higher velocity and takes larger steps on actin bundles than on single actin filaments. The tail domain binds to membranous compartments containing phosphatidylinositol 3,4,5-trisphosphate, which are then moved relative to actin filaments. Regulates cell shape, cell spreading and cell adhesion. Stimulates the formation and elongation of filopodia. In hippocampal neurons it induces the formation of dendritic filopodia by trafficking the actin-remodeling protein VASP to the tips of filopodia, where it promotes actin elongation. Plays a role in formation of the podosome belt in osteoclasts. The sequence is that of Unconventional myosin-X (MYO10) from Bos taurus (Bovine).